A 117-amino-acid chain; its full sequence is Large ribosomal subunit protein bL19 (117 aa).

This sequence belongs to the bacterial ribosomal protein bL19 family.

Its function is as follows. This protein is located at the 30S-50S ribosomal subunit interface and may play a role in the structure and function of the aminoacyl-tRNA binding site. The protein is Large ribosomal subunit protein bL19 of Sorangium cellulosum (strain So ce56) (Polyangium cellulosum (strain So ce56)).